The primary structure comprises 188 residues: Large ribosomal subunit protein uL5 (188 aa).

This sequence belongs to the universal ribosomal protein uL5 family. In terms of assembly, part of the 50S ribosomal subunit; contacts the 5S rRNA and probably tRNA. Forms a bridge to the 30S subunit in the 70S ribosome.

This is one of the proteins that bind and probably mediate the attachment of the 5S RNA into the large ribosomal subunit, where it forms part of the central protuberance. In the 70S ribosome it contacts protein S13 of the 30S subunit (bridge B1b), connecting the 2 subunits; this bridge is implicated in subunit movement. May contact the P site tRNA; the 5S rRNA and some of its associated proteins might help stabilize positioning of ribosome-bound tRNAs. This chain is Large ribosomal subunit protein uL5, found in Pyrococcus horikoshii (strain ATCC 700860 / DSM 12428 / JCM 9974 / NBRC 100139 / OT-3).